The following is a 472-amino-acid chain: F420-non-reducing hydrogenase subunit A (472 aa).

Cys-61, Cys-64, Cys-442, and Cys-445 together coordinate Ni(2+).

The protein belongs to the [NiFe]/[NiFeSe] hydrogenase large subunit family. As to quaternary structure, the F420-non-reducing hydrogenase is composed of three subunits; MvhA, MvhD and MvhG. It forms a complex with the heterodisulfide reductase (hdr). Ni(2+) serves as cofactor.

In terms of biological role, part of a complex that provides reducing equivalents for heterodisulfide reductase. The protein is F420-non-reducing hydrogenase subunit A (mvhA) of Methanothermobacter thermautotrophicus (strain ATCC 29096 / DSM 1053 / JCM 10044 / NBRC 100330 / Delta H) (Methanobacterium thermoautotrophicum).